A 95-amino-acid chain; its full sequence is Large ribosomal subunit protein bL25 (95 aa).

Belongs to the bacterial ribosomal protein bL25 family. In terms of assembly, part of the 50S ribosomal subunit; part of the 5S rRNA/L5/L18/L25 subcomplex. Contacts the 5S rRNA. Binds to the 5S rRNA independently of L5 and L18.

Functionally, this is one of the proteins that binds to the 5S RNA in the ribosome where it forms part of the central protuberance. This chain is Large ribosomal subunit protein bL25, found in Actinobacillus succinogenes (strain ATCC 55618 / DSM 22257 / CCUG 43843 / 130Z).